Reading from the N-terminus, the 179-residue chain is Large ribosomal subunit protein uL5 (179 aa).

Belongs to the universal ribosomal protein uL5 family. As to quaternary structure, part of the 50S ribosomal subunit; part of the 5S rRNA/L5/L18/L25 subcomplex. Contacts the 5S rRNA and the P site tRNA. Forms a bridge to the 30S subunit in the 70S ribosome.

In terms of biological role, this is one of the proteins that bind and probably mediate the attachment of the 5S RNA into the large ribosomal subunit, where it forms part of the central protuberance. In the 70S ribosome it contacts protein S13 of the 30S subunit (bridge B1b), connecting the 2 subunits; this bridge is implicated in subunit movement. Contacts the P site tRNA; the 5S rRNA and some of its associated proteins might help stabilize positioning of ribosome-bound tRNAs. In Janthinobacterium sp. (strain Marseille) (Minibacterium massiliensis), this protein is Large ribosomal subunit protein uL5.